We begin with the raw amino-acid sequence, 361 residues long: Thermostable alkaline protease (361 aa).

The signal sequence occupies residues 1–24 (MRQSLKVMVLSTVALLFMANPAAA). The propeptide occupies 25 to 93 (SEEKKEYLIV…IEKNAEVTIS (69 aa)). Q94 lines the Ca(2+) pocket. The Peptidase S8 domain occupies 97-360 (PWGISFINTQ…NGLVHAGRAT (264 aa)). D124 (charge relay system) is an active-site residue. D132 provides a ligand contact to Ca(2+). The Charge relay system role is filled by H154. L165, N167, I169, V171, A255, Y257, and V260 together coordinate Ca(2+). Catalysis depends on S307, which acts as the Charge relay system.

It belongs to the peptidase S8 family. The cofactor is Ca(2+).

The protein resides in the secreted. Functionally, shows keratinolytic activity. In Halalkalibacterium halodurans (strain ATCC BAA-125 / DSM 18197 / FERM 7344 / JCM 9153 / C-125) (Bacillus halodurans), this protein is Thermostable alkaline protease.